The following is a 166-amino-acid chain: MIYIDNRQNKIKVDEEFENKIKEIIDYALKEEKVNIDYEISVIFIDNNSIKEINKDYRNIDKATDVLSFPMLDYEEGEVFKDVYLNYEFDESDLDEGNLVLGDIALSLEKAEEQSKEFGHSFLRETCYLTIHSVLHLLGYDHMEEDEKAIMRQREEEILKSFNLHR.

The Zn(2+) site is built by His132, His136, and His142.

The protein belongs to the endoribonuclease YbeY family. Zn(2+) is required as a cofactor.

It localises to the cytoplasm. Single strand-specific metallo-endoribonuclease involved in late-stage 70S ribosome quality control and in maturation of the 3' terminus of the 16S rRNA. This Clostridium botulinum (strain Loch Maree / Type A3) protein is Endoribonuclease YbeY.